We begin with the raw amino-acid sequence, 499 residues long: Alpha-amylase 3 (499 aa).

The Ca(2+) site is built by Asn127 and Asp183. Residue Asp213 is the Nucleophile of the active site. His217 is a Ca(2+) binding site. Glu248 (proton donor) is an active-site residue.

It belongs to the glycosyl hydrolase 13 family. As to quaternary structure, monomer. The cofactor is Ca(2+).

The protein localises to the cytoplasm. It catalyses the reaction Endohydrolysis of (1-&gt;4)-alpha-D-glucosidic linkages in polysaccharides containing three or more (1-&gt;4)-alpha-linked D-glucose units.. This chain is Alpha-amylase 3 (amyC), found in Dictyoglomus thermophilum (strain ATCC 35947 / DSM 3960 / H-6-12).